The chain runs to 23 residues: Keratin (23 aa).

Residues tyrosine 1–arginine 23 enclose the IF rod domain. Residues tyrosine 1–arginine 23 are coil 2.

It belongs to the intermediate filament family.

The chain is Keratin from Cervus elaphus (Red deer).